Here is a 199-residue protein sequence, read N- to C-terminus: Recombination protein RecR (199 aa).

The C4-type zinc-finger motif lies at 56–71 (CRSCFNVAQSELCRIC). The region spanning 79–174 (ALICVVEEPK…RVTRLASGLP (96 aa)) is the Toprim domain.

This sequence belongs to the RecR family.

May play a role in DNA repair. It seems to be involved in an RecBC-independent recombinational process of DNA repair. It may act with RecF and RecO. This is Recombination protein RecR from Frankia alni (strain DSM 45986 / CECT 9034 / ACN14a).